A 398-amino-acid chain; its full sequence is Isochorismate synthase DhbC (398 aa).

Phosphoserine is present on Ser271.

Belongs to the isochorismate synthase family.

It catalyses the reaction chorismate = isochorismate. It functions in the pathway siderophore biosynthesis; bacillibactin biosynthesis. This chain is Isochorismate synthase DhbC (dhbC), found in Bacillus subtilis (strain 168).